A 345-amino-acid chain; its full sequence is Ferrochelatase (345 aa).

Positions 215 and 296 each coordinate Fe cation.

Belongs to the ferrochelatase family.

The protein localises to the cytoplasm. It catalyses the reaction heme b + 2 H(+) = protoporphyrin IX + Fe(2+). The protein operates within porphyrin-containing compound metabolism; protoheme biosynthesis; protoheme from protoporphyrin-IX: step 1/1. Its function is as follows. Catalyzes the ferrous insertion into protoporphyrin IX. The chain is Ferrochelatase from Rhodopseudomonas palustris (strain BisA53).